The following is a 95-amino-acid chain: Large ribosomal subunit protein bL28 (95 aa).

The protein belongs to the bacterial ribosomal protein bL28 family.

This is Large ribosomal subunit protein bL28 from Orientia tsutsugamushi (strain Ikeda) (Rickettsia tsutsugamushi).